The following is a 99-amino-acid chain: Ferredoxin, vegetative (99 aa).

The 93-residue stretch at 4-96 folds into the 2Fe-2S ferredoxin-type domain; that stretch reads YQVRLINKKR…DCTIRTHQEP (93 aa). Positions 42, 47, 50, and 80 each coordinate [2Fe-2S] cluster.

It belongs to the 2Fe2S plant-type ferredoxin family. [2Fe-2S] cluster serves as cofactor.

Ferredoxins are iron-sulfur proteins that transfer electrons in a wide variety of metabolic reactions. Donates electrons to the nitrogenase 2. In Trichormus variabilis (strain ATCC 29413 / PCC 7937) (Anabaena variabilis), this protein is Ferredoxin, vegetative (fdxH2).